The following is a 466-amino-acid chain: Coagulation factor VII (466 aa).

An N-terminal signal peptide occupies residues 1-20 (MVSQALRLLCLLLGLQGCLA). Positions 21–60 (AGGVAEASGGETRDXXWKPGPHRVFITQEEAHGVLHRRRR) are excised as a propeptide. One can recognise a Gla domain in the interval 61–105 (ANAFLEELRPGSLERECKEEQCSFEEAREIFKDLERTKLFWISYS). Residues Glu-66, Glu-67, Glu-74, Glu-76, Glu-79, Glu-80, Glu-85, Glu-86, Glu-89, and Glu-95 each carry the 4-carboxyglutamate modification. The cysteines at positions 77 and 82 are disulfide-linked. The 37-residue stretch at 106-142 (DGDQCASSPCQNGGSCKDQLQSYICFCLPAFEGRNCE) folds into the EGF-like 1; calcium-binding domain. 10 cysteine pairs are disulfide-bonded: Cys-110/Cys-121, Cys-115/Cys-130, Cys-132/Cys-141, Cys-151/Cys-162, Cys-158/Cys-172, Cys-174/Cys-187, Cys-195/Cys-322, Cys-219/Cys-224, Cys-238/Cys-254, and Cys-370/Cys-389. Ser-112 carries an O-linked (Glc...) serine; alternate glycan. Ser-112 carries O-linked (Xyl...) serine; alternate glycosylation. O-linked (Fuc) serine glycosylation is present at Ser-120. Position 123 is a (3R)-3-hydroxyaspartate (Asp-123). The EGF-like 2 domain occupies 147 to 188 (DQLICVNENGGCEQYCSDHTGTKRSCRCHEGYSLLADGVSCT). N-linked (GlcNAc...) asparagine glycosylation occurs at Asn-205. Residues 213–452 (IVGGKVCPKG…YIEWLQKLMR (240 aa)) enclose the Peptidase S1 domain. Active-site charge relay system residues include His-253 and Asp-302. Asn-382 carries an N-linked (GlcNAc...) asparagine glycan. A substrate-binding site is contributed by Asp-398. A disulfide bridge links Cys-400 with Cys-428. Ser-404 (charge relay system) is an active-site residue.

This sequence belongs to the peptidase S1 family. Heterodimer of a light chain and a heavy chain linked by a disulfide bond. The vitamin K-dependent, enzymatic carboxylation of some glutamate residues allows the modified protein to bind calcium. Post-translationally, the iron and 2-oxoglutarate dependent 3-hydroxylation of aspartate and asparagine is (R) stereospecific within EGF domains. In terms of processing, O-glycosylated. O-fucosylated by POFUT1 on a conserved serine or threonine residue found in the consensus sequence C2-X(4,5)-[S/T]-C3 of EGF domains, where C2 and C3 are the second and third conserved cysteines. Can be either O-glucosylated or O-xylosylated at Ser-112 by POGLUT1.

The protein localises to the secreted. The enzyme catalyses Selective cleavage of Arg-|-Ile bond in factor X to form factor Xa.. Its function is as follows. Initiates the extrinsic pathway of blood coagulation. Serine protease that circulates in the blood in a zymogen form. Factor VII is converted to factor VIIa by factor Xa, factor XIIa, factor IXa, or thrombin by minor proteolysis. In the presence of tissue factor and calcium ions, factor VIIa then converts factor X to factor Xa by limited proteolysis. Factor VIIa also converts factor IX to factor IXa in the presence of tissue factor and calcium. In Pan troglodytes (Chimpanzee), this protein is Coagulation factor VII (F7).